The following is a 1211-amino-acid chain: Transient receptor potential cation channel subfamily A member 1 homolog (1211 aa).

The Cytoplasmic portion of the chain corresponds to 1 to 811; it reads MSKKSLGLDV…LKYKWNRLGR (811 aa). ANK repeat units follow at residues 49-79, 83-112, 116-169, 173-202, 206-235, 239-270, 277-306, 311-340, 344-374, 378-407, 411-440, 473-502, 506-535, 540-569, 573-602, 605-634, and 638-669; these read NLRS…AVNA, DFMT…LPNT, EGDT…EIDP, YQLT…DVDA, NKMT…NVTK, RLNT…AIKA, EKKT…KNSC, REKE…NKNE, VKAV…NIDV, QGLT…NLTI, DERT…KKNK, DQNT…SITQ, DEET…RLLL, MGNS…DKEA, YQKT…QIES, DTKT…TIDR, and EGKT…NLMI. The helical transmembrane segment at 812-832 threads the bilayer; that stretch reads PMYYFALFMYLVFIVSLTQYV. Residues 833 to 870 are Extracellular-facing; sequence RHTKAPYNVWNEESYYDSEYFDENETCPQINTTKPDVV. Residues N856 and N863 are each glycosylated (N-linked (GlcNAc...) asparagine). Residues 871–891 form a helical membrane-spanning segment; it reads WKIIIQTLAVCQILVECFQLF. Residues 892–894 are Cytoplasmic-facing; the sequence is QRK. The chain crosses the membrane as a helical span at residues 895–915; that stretch reads FAYLVNWENWIDCFIYSTALI. Over 916–932 the chain is Extracellular; that stretch reads TVYDFSECSATSGVRQN. The helical transmembrane segment at 933–953 threads the bilayer; sequence WQWILAALCIFFGWINLLFMI. Topologically, residues 954–975 are cytoplasmic; sequence RKMPRFGIFVVMFVDIVKTFFR. The chain crosses the membrane as a helical span at residues 976–996; it reads FFPVFVLFIIAFSSSFYVILQ. Residues 997–1004 are Extracellular-facing; sequence NRPEFSTI. The pore-forming intramembrane region spans 1005-1025; that stretch reads FMSPLKTTVMMIGEFEFTGIF. The Extracellular portion of the chain corresponds to 1026–1048; it reads HGDETTHAEKMFGPAHTAVACAL. The helical transmembrane segment at 1049 to 1069 threads the bilayer; that stretch reads FFFFCIIMTILLMNLLVGLAV. The Cytoplasmic portion of the chain corresponds to 1070–1193; the sequence is DDIKGVQEKA…EKQVRLEAII (124 aa). Residues 1149 to 1191 adopt a coiled-coil conformation; that stretch reads EMYEREAEFTSEMTQKLQNQAAKLKNIQENIDVMYEKQVRLEA.

This sequence belongs to the transient receptor (TC 1.A.4) family. As to quaternary structure, homotetramer. As to expression, expressed in many sensory neurons, including OLQ and IL1 neurons.

The protein localises to the cell membrane. Functionally, receptor-activated non-selective cation channel involved in the nose-touch response and foraging behavior. Contributes to the neural responses of sensory neurons to touch, particularly after repeated mechanical stimulation. Has no apparent role in thermosensory or chemosensory behaviors. In Caenorhabditis elegans, this protein is Transient receptor potential cation channel subfamily A member 1 homolog (trpa-1).